The chain runs to 87 residues: U3-theraphotoxin-Hhn1m (87 aa).

The signal sequence occupies residues 1–24 (MVNMKASMFLTFAGLVLLFVVCYA). Positions 25-52 (SESEEKEFPKEMLSSIFAVDNDFKQEER) are excised as a propeptide. 3 disulfides stabilise this stretch: Cys54–Cys67, Cys61–Cys72, and Cys66–Cys79.

It belongs to the neurotoxin 10 (Hwtx-1) family. 51 (Hntx-8) subfamily. Hntx-8 sub-subfamily. As to expression, expressed by the venom gland.

The protein resides in the secreted. Ion channel inhibitor. This chain is U3-theraphotoxin-Hhn1m, found in Cyriopagopus hainanus (Chinese bird spider).